The following is a 409-amino-acid chain: Broad specificity amino-acid racemase (409 aa).

A signal peptide spans 1 to 24 (MPFRRTLLAASLVLLITGQAPLYA). C71 and C97 are oxidised to a cystine. K75 functions as the Proton acceptor in the catalytic mechanism. The residue at position 75 (K75) is an N6-(pyridoxal phosphate)lysine. R174 provides a ligand contact to substrate. Y301 serves as the catalytic Proton acceptor. Substrate is bound at residue M349.

Belongs to the alanine racemase family. Bsr subfamily. In terms of assembly, monomer. Forms a head-to-tail homodimer in the structure. The cofactor is pyridoxal 5'-phosphate.

It is found in the periplasm. It carries out the reaction an L-alpha-amino acid = a D-alpha-amino acid. The catalysed reaction is L-lysine = D-lysine. It catalyses the reaction L-arginine = D-arginine. The enzyme catalyses L-alanine = D-alanine. Activity is enhanced by Co(2+), Mn(2+) and Sr(2+), and decreased by Cu(2+). In terms of biological role, amino-acid racemase that catalyzes the interconversion of L-lysine and D-lysine, and L-arginine and D-arginine. To a lesser extent, is also able to interconvert alanine and isoleucine enantiomers. This Pseudomonas putida (Arthrobacter siderocapsulatus) protein is Broad specificity amino-acid racemase.